An 89-amino-acid chain; its full sequence is Acylphosphatase (89 aa).

The Acylphosphatase-like domain occupies 3–89; the sequence is RFTARVAGLV…QSDLTDFRRK (87 aa). Catalysis depends on residues arginine 18 and asparagine 36.

This sequence belongs to the acylphosphatase family.

The enzyme catalyses an acyl phosphate + H2O = a carboxylate + phosphate + H(+). The protein is Acylphosphatase (acyP) of Frankia casuarinae (strain DSM 45818 / CECT 9043 / HFP020203 / CcI3).